Here is a 229-residue protein sequence, read N- to C-terminus: Aminopyrimidine aminohydrolase (229 aa).

Substrate is bound at residue Asp-44. Cys-137 functions as the Nucleophile in the catalytic mechanism. Residues Tyr-141 and Tyr-167 each coordinate substrate. The active-site Proton donor is Glu-208.

The protein belongs to the TenA family. In terms of assembly, homotetramer.

The catalysed reaction is 4-amino-5-aminomethyl-2-methylpyrimidine + H2O = 4-amino-5-hydroxymethyl-2-methylpyrimidine + NH4(+). The enzyme catalyses thiamine + H2O = 5-(2-hydroxyethyl)-4-methylthiazole + 4-amino-5-hydroxymethyl-2-methylpyrimidine + H(+). Its pathway is cofactor biosynthesis; thiamine diphosphate biosynthesis. Functionally, catalyzes an amino-pyrimidine hydrolysis reaction at the C5' of the pyrimidine moiety of thiamine compounds, a reaction that is part of a thiamine salvage pathway. Thus, catalyzes the conversion of 4-amino-5-aminomethyl-2-methylpyrimidine to 4-amino-5-hydroxymethyl-2-methylpyrimidine (HMP). Is also able to catalyze the hydrolytic cleavage of thiamine; however, this thiaminase activity may not be physiologically relevant. Therefore, is probably involved in the regeneration of the thiamine pyrimidine from thiamine degraded products present in the environment, rather than in thiamine degradation. This chain is Aminopyrimidine aminohydrolase, found in Staphylococcus aureus (strain MRSA252).